The primary structure comprises 273 residues: Shikimate dehydrogenase (NADP(+)) (273 aa).

Shikimate is bound by residues 18 to 20 and threonine 65; that span reads SKS. The Proton acceptor role is filled by lysine 69. NADP(+) is bound at residue glutamate 81. The shikimate site is built by asparagine 90 and aspartate 105. Residues 130–134, 154–159, and methionine 217 each bind NADP(+); these read GAGGA and NRTHSK. Tyrosine 219 lines the shikimate pocket. Glycine 240 is a binding site for NADP(+).

This sequence belongs to the shikimate dehydrogenase family. As to quaternary structure, homodimer.

The enzyme catalyses shikimate + NADP(+) = 3-dehydroshikimate + NADPH + H(+). It functions in the pathway metabolic intermediate biosynthesis; chorismate biosynthesis; chorismate from D-erythrose 4-phosphate and phosphoenolpyruvate: step 4/7. In terms of biological role, involved in the biosynthesis of the chorismate, which leads to the biosynthesis of aromatic amino acids. Catalyzes the reversible NADPH linked reduction of 3-dehydroshikimate (DHSA) to yield shikimate (SA). This is Shikimate dehydrogenase (NADP(+)) from Herminiimonas arsenicoxydans.